A 450-amino-acid chain; its full sequence is tRNA modification GTPase MnmE (450 aa).

3 residues coordinate (6S)-5-formyl-5,6,7,8-tetrahydrofolate: Arg23, Glu80, and Arg123. A TrmE-type G domain is found at 219–372 (GLHVVLAGQP…LRARLLQMAG (154 aa)). Residue Asn229 participates in K(+) binding. GTP contacts are provided by residues 229–234 (NVGKSS), 248–254 (TPIAGTT), and 273–276 (DTAG). Mg(2+) is bound at residue Ser233. Residues Thr248, Ile250, and Thr253 each coordinate K(+). Thr254 lines the Mg(2+) pocket. Lys450 contributes to the (6S)-5-formyl-5,6,7,8-tetrahydrofolate binding site.

Belongs to the TRAFAC class TrmE-Era-EngA-EngB-Septin-like GTPase superfamily. TrmE GTPase family. In terms of assembly, homodimer. Heterotetramer of two MnmE and two MnmG subunits. K(+) serves as cofactor.

It localises to the cytoplasm. Its function is as follows. Exhibits a very high intrinsic GTPase hydrolysis rate. Involved in the addition of a carboxymethylaminomethyl (cmnm) group at the wobble position (U34) of certain tRNAs, forming tRNA-cmnm(5)s(2)U34. The protein is tRNA modification GTPase MnmE of Bordetella avium (strain 197N).